The following is a 561-amino-acid chain: Reductase FVEG_12641 (561 aa).

The segment at 1–26 is disordered; it reads MGVQSTANLPKETVSHLDTAPTPKPG. In terms of domain architecture, MOSC spans 52 to 189; that stretch reads QQHDGPVFCS…ICKGDTISLL (138 aa). One can recognise an FAD-binding FR-type domain in the interval 237–342; the sequence is SAPKTYTLVD…PGSNPGAMEN (106 aa). Residues 288 to 289, 305 to 307, 313 to 316, and threonine 362 each bind FMN; these read FE, GVS, and RGGS. One can recognise a 2Fe-2S ferredoxin-type domain in the interval 474–561; that stretch reads FEVEVDEPDS…GIGRLRIEID (88 aa). Cysteine 512 lines the [2Fe-2S] cluster pocket. Serine 514 contacts FMN. The [2Fe-2S] cluster site is built by cysteine 517, cysteine 520, and cysteine 548.

Belongs to the PDR/VanB family. In terms of assembly, monomer. FMN is required as a cofactor.

Its function is as follows. Reductase; part of the Fusarium detoxification of benzoxazolinone cluster 2 (FDB2) involved in the degradation of benzoxazolinones produced by the host plant. Maize, wheat, and rye produce the 2 benzoxazinone phytoanticipins 2,4-dihy-droxy-7-methoxy-1,4-benzoxazin-3-one (DIMBOA) and 2,4-dihydroxy-1,4-benzoxazin-3-one (DIBOA) that, due to their inherent instability once released, spontaneously degrade to the more stable corresponding benzoxazolinones, 6-methoxy-2-benzoxazolinone (MBOA) and 2-benzoxazolinone (BOA), respectively. The first step in the detoxification of benzoxazolinones involves the hydrolysis of the cyclic ester bond of benzoxazolinones by the FDB1 cluster gamma-lactamase MBL1 to aminophenols. MBL1 is able to convert BOA into 2-aminophenol (2-AP), as well as MBOA into 5-methoxy-2-aminophenol (2-AMP). The FDB2 cluster N-malonyltransferase FDB2/NAT1 then metabolizes aminophenols via N-malonylation to non-toxic malonamic acids. FDB2/NAT1 converts 2-AP into N-(2-hydroxyphenyl) malonamic acid (HPMA) and 2-AMP into N-(2-hydroxy-4-methoxyphenyl) malonamic acid (HMPMA). The duplicated dienlactone hydrolases DLH1 and DLH2 may provide redundant function for hydrolyzing the lactone moiety in the BOA molecule. The roles of the amidases an other enzymes encoded by the 2 FDB clusters have not been identified so far. The polypeptide is Reductase FVEG_12641 (Gibberella moniliformis (strain M3125 / FGSC 7600) (Maize ear and stalk rot fungus)).